The sequence spans 58 residues: Large ribosomal subunit protein bL32 (58 aa).

This sequence belongs to the bacterial ribosomal protein bL32 family.

This chain is Large ribosomal subunit protein bL32, found in Anaplasma marginale (strain Florida).